A 457-amino-acid polypeptide reads, in one-letter code: MQTIDFEKFSQYSKPGPRYTSYPTAVEFKENFNEESLKTAFFNHDNLKNPMPLSLYTHLPFCRSACYFCACSVIYTSLEEKKVRYISYLKKELALLKNAMDTNREVAQFHYGGGTPTFFSPPQLDEITQSIQEVFPNFSQDIEMSCEIDPRHFTKEHMQTLFDRGFNRLSFGVQDFDLEVQKAIHRIQPFEMVQESVKLARDYGIKSINFDLIYGLPNQTKEGFLKTLEWVLKLDPDRLAVFNYAHVPWVKKTMRKIDETLLPSPRDKLEILESLISFLEKANYQMIGMDHFAKSDNELYLALQKAELRRNFQGYTTKKFTQTIGIGVTSIGEGSDYYTQNYKDLHYYEKALDLGHLPVERGVALSQEDVLRKEVIMQMMSNLKLDYSKIEEKFSIDFKAHFKKELEKLKPYEEAGLLSFNSKGFEMTRTGGMLVRNMAMEFDAYLRGGEKHFSKTL.

The Radical SAM core domain maps to 47-279 (LKNPMPLSLY…EILESLISFL (233 aa)). Tyr56 is an S-adenosyl-L-methionine binding site. The [4Fe-4S] cluster site is built by Cys62 and Cys66. Phe68 lines the S-adenosyl-L-methionine pocket. Cys69 contacts [4Fe-4S] cluster. Residues Gly113, 114–115 (GT), Glu147, Gln174, Arg186, Asp211, Ala245, and Ile331 each bind S-adenosyl-L-methionine.

Belongs to the anaerobic coproporphyrinogen-III oxidase family. In terms of assembly, monomer. It depends on [4Fe-4S] cluster as a cofactor.

Its subcellular location is the cytoplasm. The catalysed reaction is coproporphyrinogen III + 2 S-adenosyl-L-methionine = protoporphyrinogen IX + 2 5'-deoxyadenosine + 2 L-methionine + 2 CO2. Its pathway is porphyrin-containing compound metabolism; protoporphyrin-IX biosynthesis; protoporphyrinogen-IX from coproporphyrinogen-III (AdoMet route): step 1/1. Its function is as follows. Involved in the heme biosynthesis. Catalyzes the anaerobic oxidative decarboxylation of propionate groups of rings A and B of coproporphyrinogen III to yield the vinyl groups in protoporphyrinogen IX. The protein is Oxygen-independent coproporphyrinogen III oxidase (hemN) of Helicobacter pylori (strain J99 / ATCC 700824) (Campylobacter pylori J99).